Consider the following 40-residue polypeptide: Photosystem II reaction center protein J (40 aa).

Residues 8–28 form a helical membrane-spanning segment; sequence IPLWLIGTVAGILIIGLLGVF.

This sequence belongs to the PsbJ family. In terms of assembly, PSII is composed of 1 copy each of membrane proteins PsbA, PsbB, PsbC, PsbD, PsbE, PsbF, PsbH, PsbI, PsbJ, PsbK, PsbL, PsbM, PsbT, PsbX, PsbY, PsbZ, Psb30/Ycf12, at least 3 peripheral proteins of the oxygen-evolving complex and a large number of cofactors. It forms dimeric complexes.

Its subcellular location is the plastid. It is found in the chloroplast thylakoid membrane. One of the components of the core complex of photosystem II (PSII). PSII is a light-driven water:plastoquinone oxidoreductase that uses light energy to abstract electrons from H(2)O, generating O(2) and a proton gradient subsequently used for ATP formation. It consists of a core antenna complex that captures photons, and an electron transfer chain that converts photonic excitation into a charge separation. This chain is Photosystem II reaction center protein J, found in Nandina domestica (Heavenly bamboo).